A 488-amino-acid chain; its full sequence is MVRRLWRRIAGWLAACVAILCAFPLHAATAGPGAWSSQQTWAADSVNGGNLTGYFYWPASQPTTPNGKRALVLVLHGCVQTASGDVIDNANGAGFNWKSVADQYGAVILAPNATGNVYSNHCWDYANASPSRTAGHVGVLLDLVNRFVTNSQYAIDPNQVYVAGLSSGGGMTMVLGCIAPDIFAGIGINAGPPPGTTTAQIGYVPSGFTATTAANKCNAWAGSNAGKFSTQIAGAVWGTSDYTVAQAYGPMDAAAMRLVYGGNFTQGSQVSISGGGTNTPYTDSNGKVRTHEISVSGMAHAWPAGTGGDNTNYVDATHINYPVFVMDYWVKNNLRAGSGTGQAGSAPTGLAVTATTSTSVSLSWNAVANASSYGVYRNGSKVGSATATAYTDSGLIAGTTYSYTVTAVDPTAGESQPSAAVSATTKSAFTCTATTASNYAHVQAGRAHDSGGIAYANGSNQSMGLDNLFYTSTLAQTAAGYYIVGNCP.

The first 27 residues, 1–27, serve as a signal peptide directing secretion; that stretch reads MVRRLWRRIAGWLAACVAILCAFPLHA. Residue Ser166 is the Charge relay system of the active site. A Fibronectin type-III domain is found at 346–428; the sequence is APTGLAVTAT…AAVSATTKSA (83 aa).

Belongs to the AB hydrolase superfamily. Lipase family.

Its subcellular location is the secreted. The catalysed reaction is [(3R)-hydroxybutanoate](n) + H2O = [(3R)-hydroxybutanoate](n-2) + (3R)-hydroxybutanoate dimer + H(+). It catalyses the reaction [(3R)-hydroxybutanoate](n) + H2O = [(3R)-hydroxybutanoate](n-3) + (3R)-hydroxybutanoate trimer + H(+). The enzyme catalyses [(3R)-hydroxybutanoate](n) + H2O = [(3R)-hydroxybutanoate](n-1) + (R)-3-hydroxybutanoate + H(+). It carries out the reaction [(3R)-hydroxybutanoate](n) + H2O = [(3R)-hydroxybutanoate](n-5) + (3R)-hydroxybutanoate pentamer + H(+). The catalysed reaction is [(3R)-hydroxybutanoate](n) + H2O = [(3R)-hydroxybutanoate](n-4) + (3R)-hydroxybutanoate tetramer + H(+). Functionally, this protein degrades water-insoluble and water-soluble PHB to monomeric D(-)-3-hydroxybutyrate. The sequence is that of Poly(3-hydroxybutyrate) depolymerase from Ralstonia pickettii (Burkholderia pickettii).